A 228-amino-acid chain; its full sequence is L-ribulose-5-phosphate 4-epimerase UlaF (228 aa).

Substrate-binding positions include 26–27 (GN), 43–44 (SG), and 72–73 (SS). Residues Asp-74, His-93, and His-95 each coordinate Zn(2+). The active-site Proton donor/acceptor is Asp-118. Position 167 (His-167) interacts with Zn(2+). The active-site Proton donor/acceptor is Tyr-225.

This sequence belongs to the aldolase class II family. AraD/FucA subfamily. The cofactor is Zn(2+).

The enzyme catalyses L-ribulose 5-phosphate = D-xylulose 5-phosphate. It participates in cofactor degradation; L-ascorbate degradation; D-xylulose 5-phosphate from L-ascorbate: step 4/4. Catalyzes the isomerization of L-ribulose 5-phosphate to D-xylulose 5-phosphate. Is involved in the anaerobic L-ascorbate utilization. In Escherichia coli (strain ATCC 8739 / DSM 1576 / NBRC 3972 / NCIMB 8545 / WDCM 00012 / Crooks), this protein is L-ribulose-5-phosphate 4-epimerase UlaF.